The sequence spans 378 residues: Glycerate kinase (378 aa).

It belongs to the glycerate kinase type-1 family.

It catalyses the reaction (R)-glycerate + ATP = (2R)-3-phosphoglycerate + ADP + H(+). This is Glycerate kinase (glxK) from Haemophilus influenzae (strain ATCC 51907 / DSM 11121 / KW20 / Rd).